A 160-amino-acid polypeptide reads, in one-letter code: Small ribosomal subunit protein uS9 (160 aa).

Belongs to the universal ribosomal protein uS9 family.

The protein is Small ribosomal subunit protein uS9 of Rhodopseudomonas palustris (strain ATCC BAA-98 / CGA009).